Reading from the N-terminus, the 313-residue chain is Dihydroorotate dehydrogenase B (NAD(+)), catalytic subunit (313 aa).

Residues Ser21 and 45 to 46 (KA) each bind FMN. Substrate-binding positions include Lys45 and 69 to 73 (NAIGL). FMN-binding residues include Asn99 and Asn127. Asn127 is a substrate binding site. Residue Cys130 is the Nucleophile of the active site. Residues Lys165 and Ile191 each contribute to the FMN site. 192 to 193 (NT) contacts substrate. Residues Gly217, 243-244 (GG), and 265-266 (GT) each bind FMN.

Belongs to the dihydroorotate dehydrogenase family. Type 1 subfamily. In terms of assembly, heterotetramer of 2 PyrK and 2 PyrD type B subunits. Requires FMN as cofactor.

The protein resides in the cytoplasm. It carries out the reaction (S)-dihydroorotate + NAD(+) = orotate + NADH + H(+). The protein operates within pyrimidine metabolism; UMP biosynthesis via de novo pathway; orotate from (S)-dihydroorotate (NAD(+) route): step 1/1. Functionally, catalyzes the conversion of dihydroorotate to orotate with NAD(+) as electron acceptor. This chain is Dihydroorotate dehydrogenase B (NAD(+)), catalytic subunit (pyrD), found in Geobacillus kaustophilus (strain HTA426).